Here is a 210-residue protein sequence, read N- to C-terminus: NADH dehydrogenase [ubiquinone] iron-sulfur protein 8, mitochondrial (210 aa).

The transit peptide at 1–34 (MRCLTTPMLLRALAQAARAGPPGGRSLHSSAVAA) directs the protein to the mitochondrion. 4Fe-4S ferredoxin-type domains follow at residues 102–131 (RRYPSGEERCIACKLCEAICPAQAITIEAE) and 141–170 (TRYDIDMTKCIYCGFCQEACPVDAIVEGPN). The [4Fe-4S] cluster site is built by C111, C114, C117, C121, C150, C153, C156, and C160.

This sequence belongs to the complex I 23 kDa subunit family. In terms of assembly, core subunit of respiratory chain NADH dehydrogenase (Complex I) which is composed of 45 different subunits. This is a component of the iron-sulfur (IP) fragment of the enzyme. Interacts with RAB5IF. Requires [4Fe-4S] cluster as cofactor. As to expression, expressed in all tissues with the highest level in heart and skeletal muscle and the lowest level in lung.

The protein localises to the mitochondrion inner membrane. It catalyses the reaction a ubiquinone + NADH + 5 H(+)(in) = a ubiquinol + NAD(+) + 4 H(+)(out). Functionally, core subunit of the mitochondrial membrane respiratory chain NADH dehydrogenase (Complex I) which catalyzes electron transfer from NADH through the respiratory chain, using ubiquinone as an electron acceptor. Essential for the catalytic activity and assembly of complex I. This is NADH dehydrogenase [ubiquinone] iron-sulfur protein 8, mitochondrial (NDUFS8) from Homo sapiens (Human).